Reading from the N-terminus, the 339-residue chain is Ketol-acid reductoisomerase (NADP(+)) (339 aa).

Residues Met1–Thr182 form the KARI N-terminal Rossmann domain. Residues Tyr24–Gln27, Arg48, Ser51, Ser53, and Asp83–Gln86 contribute to the NADP(+) site. His108 is an active-site residue. Residue Gly134 participates in NADP(+) binding. In terms of domain architecture, KARI C-terminal knotted spans Thr183–Ile328. Mg(2+) is bound by residues Asp191, Glu195, Glu227, and Glu231. Residue Ser252 participates in substrate binding.

This sequence belongs to the ketol-acid reductoisomerase family. The cofactor is Mg(2+).

It carries out the reaction (2R)-2,3-dihydroxy-3-methylbutanoate + NADP(+) = (2S)-2-acetolactate + NADPH + H(+). The catalysed reaction is (2R,3R)-2,3-dihydroxy-3-methylpentanoate + NADP(+) = (S)-2-ethyl-2-hydroxy-3-oxobutanoate + NADPH + H(+). It participates in amino-acid biosynthesis; L-isoleucine biosynthesis; L-isoleucine from 2-oxobutanoate: step 2/4. Its pathway is amino-acid biosynthesis; L-valine biosynthesis; L-valine from pyruvate: step 2/4. Functionally, involved in the biosynthesis of branched-chain amino acids (BCAA). Catalyzes an alkyl-migration followed by a ketol-acid reduction of (S)-2-acetolactate (S2AL) to yield (R)-2,3-dihydroxy-isovalerate. In the isomerase reaction, S2AL is rearranged via a Mg-dependent methyl migration to produce 3-hydroxy-3-methyl-2-ketobutyrate (HMKB). In the reductase reaction, this 2-ketoacid undergoes a metal-dependent reduction by NADPH to yield (R)-2,3-dihydroxy-isovalerate. The protein is Ketol-acid reductoisomerase (NADP(+)) of Nitrobacter hamburgensis (strain DSM 10229 / NCIMB 13809 / X14).